The primary structure comprises 221 residues: UPF0502 protein PSPA7_1674 (221 aa).

Belongs to the UPF0502 family.

In Pseudomonas paraeruginosa (strain DSM 24068 / PA7) (Pseudomonas aeruginosa (strain PA7)), this protein is UPF0502 protein PSPA7_1674.